The following is a 147-amino-acid chain: Myoglobin (147 aa).

Residues A2 to E137 enclose the Globin domain. Position 60 (H60) interacts with nitrite. H60 provides a ligand contact to O2. H89 lines the heme b pocket.

It belongs to the globin family. In terms of assembly, monomeric.

It is found in the cytoplasm. The protein localises to the sarcoplasm. The catalysed reaction is Fe(III)-heme b-[protein] + nitric oxide + H2O = Fe(II)-heme b-[protein] + nitrite + 2 H(+). It carries out the reaction H2O2 + AH2 = A + 2 H2O. In terms of biological role, monomeric heme protein which primary function is to store oxygen and facilitate its diffusion within muscle tissues. Reversibly binds oxygen through a pentacoordinated heme iron and enables its timely and efficient release as needed during periods of heightened demand. Depending on the oxidative conditions of tissues and cells, and in addition to its ability to bind oxygen, it also has a nitrite reductase activity whereby it regulates the production of bioactive nitric oxide. Under stress conditions, like hypoxia and anoxia, it also protects cells against reactive oxygen species thanks to its pseudoperoxidase activity. The sequence is that of Myoglobin (mb) from Makaira nigricans (Atlantic blue marlin).